The primary structure comprises 289 residues: 4-hydroxy-tetrahydrodipicolinate synthase (289 aa).

Thr45 serves as a coordination point for pyruvate. The Proton donor/acceptor role is filled by Tyr133. Lys161 acts as the Schiff-base intermediate with substrate in catalysis. Ile200 provides a ligand contact to pyruvate.

Belongs to the DapA family. Homotetramer; dimer of dimers.

It is found in the cytoplasm. It catalyses the reaction L-aspartate 4-semialdehyde + pyruvate = (2S,4S)-4-hydroxy-2,3,4,5-tetrahydrodipicolinate + H2O + H(+). It functions in the pathway amino-acid biosynthesis; L-lysine biosynthesis via DAP pathway; (S)-tetrahydrodipicolinate from L-aspartate: step 3/4. Catalyzes the condensation of (S)-aspartate-beta-semialdehyde [(S)-ASA] and pyruvate to 4-hydroxy-tetrahydrodipicolinate (HTPA). This chain is 4-hydroxy-tetrahydrodipicolinate synthase, found in Coxiella burnetii (strain Dugway 5J108-111).